The following is a 431-amino-acid chain: MPPILQRLQQATKMMSRRKILLLVLGCSTVSLLIHQGAQLSWYPKLFPLSCPPLRNSPPRPKHMTVAFLKTHKTAGTTVQNILFRFAERHNLTVALPHPSCEHQFCYPRNFSAHFVHPATRPPHVLASHLRFDRAELERLMPPSTVYVTILREPAAMFESLFSYYNQYCPAFRRVPNASLEAFLRAPEAYYRAGEHFAMFAHNTLAYDLGGDNERSPRDDAAYLAGLIRQVEEVFSLVMIAEYFDESLVLLRRLLAWDLDDVLYAKLNARAASSRLAAIPAALARAARTWNALDAGLYDHFNATFWRHVARAGRACVEREARELREARQRLLRRCFGDEPLLRPAAQIRTKQLQPWQPSRKVDIMGYDLPGGGAGPATEACLKLAMPEVQYSNYLLRKQKRRGGARARPEPVLDNPPPRPIRVLPRGPQGP.

At 1 to 19 the chain is on the cytoplasmic side; it reads MPPILQRLQQATKMMSRRK. A helical; Signal-anchor for type II membrane protein membrane pass occupies residues 20-40; it reads ILLLVLGCSTVSLLIHQGAQL. Residues 41-431 lie on the Lumenal side of the membrane; that stretch reads SWYPKLFPLS…RVLPRGPQGP (391 aa). N-linked (GlcNAc...) asparagine glycosylation is found at asparagine 91, asparagine 110, asparagine 177, and asparagine 302. The segment at 399-431 is disordered; it reads QKRRGGARARPEPVLDNPPPRPIRVLPRGPQGP.

This sequence belongs to the galactose-3-O-sulfotransferase family. Mg(2+) serves as cofactor. Highly expressed in thyroid, brain, kidney, heart and spinal cord.

It localises to the golgi apparatus. The protein localises to the golgi stack membrane. It functions in the pathway protein modification; carbohydrate sulfation. Its function is as follows. Transfers a sulfate to position 3 of non-reducing beta-galactosyl residues in N-glycans and core2-branched O-glycans. Has high activity towards Gal-beta-1,4-GlcNAc, Gal-beta-1,4(Fuc-alpha-1,3)GlcNAc and lower activity towards Gal-beta-1,3(Fuc-alpha-1,4)GlcNAc. The chain is Galactose-3-O-sulfotransferase 3 (GAL3ST3) from Homo sapiens (Human).